The following is a 236-amino-acid chain: UPF0502 protein Bcenmc03_4618 (236 aa).

Belongs to the UPF0502 family.

The chain is UPF0502 protein Bcenmc03_4618 from Burkholderia orbicola (strain MC0-3).